Reading from the N-terminus, the 492-residue chain is MAGLLHLVLLSTALGGLLRPAGSVFLPRDQAHRVLQRARRANSFLEEVKQGNLERECLEEACSLEEAREVFEDAEQTDEFWSKYKDGDQCEGHPCLNQGHCKDGIGDYTCTCAEGFEGKNCEFSTREICSLDNGGCDQFCREERSEVRCSCAHGYVLGDDSKSCVSTERFPCGKFTQGRSRRWAIHTSEDALDASELEHYDPADLSPTESSLDLLGLNRTEPSAGEDGSQVVRIVGGRDCAEGECPWQALLVNEENEGFCGGTILNEFYVLTAAHCLHQAKRFTVRVGDRNTEQEEGNEMAHEVEMTVKHSRFVKETYDFDIAVLRLKTPIRFRRNVAPACLPEKDWAEATLMTQKTGIVSGFGRTHEKGRLSSTLKMLEVPYVDRSTCKLSSSFTITPNMFCAGYDTQPEDACQGDSGGPHVTRFKDTYFVTGIVSWGEGCARKGKFGVYTKVSNFLKWIDKIMKARAGAAGSRGHSEAPATWTVPPPLPL.

Positions 1–23 (MAGLLHLVLLSTALGGLLRPAGS) are cleaved as a signal peptide. A propeptide spanning residues 24–40 (VFLPRDQAHRVLQRARR) is cleaved from the precursor. In terms of domain architecture, Gla spans 41-85 (ANSFLEEVKQGNLERECLEEACSLEEAREVFEDAEQTDEFWSKYK). 12 positions are modified to 4-carboxyglutamate: Glu-46, Glu-47, Glu-54, Glu-56, Glu-59, Glu-60, Glu-65, Glu-66, Glu-69, Glu-72, Glu-75, and Glu-79. Residues Cys-57 and Cys-62 are joined by a disulfide bond. Residues 86–122 (DGDQCEGHPCLNQGHCKDGIGDYTCTCAEGFEGKNCE) enclose the EGF-like 1; calcium-binding domain. Intrachain disulfides connect Cys-90-Cys-101, Cys-95-Cys-110, Cys-112-Cys-121, Cys-129-Cys-140, Cys-136-Cys-149, Cys-151-Cys-164, Cys-172-Cys-341, Cys-240-Cys-245, Cys-260-Cys-276, Cys-389-Cys-403, and Cys-414-Cys-442. Position 103 is a (3R)-3-hydroxyaspartate (Asp-103). Residues 125–165 (TREICSLDNGGCDQFCREERSEVRCSCAHGYVLGDDSKSCV) enclose the EGF-like 2 domain. Residues 183-233 (WAIHTSEDALDASELEHYDPADLSPTESSLDLLGLNRTEPSAGEDGSQVVR) constitute a propeptide, activation peptide. A Sulfotyrosine modification is found at Tyr-200. Residue Thr-208 is glycosylated (O-linked (GalNAc...) threonine). A glycan (N-linked (GlcNAc...) asparagine) is linked at Asn-218. The 233-residue stretch at 234–466 (IVGGRDCAEG…FLKWIDKIMK (233 aa)) folds into the Peptidase S1 domain. Catalysis depends on charge relay system residues His-275 and Asp-321. The active-site Charge relay system is the Ser-418. The disordered stretch occupies residues 472-492 (AGSRGHSEAPATWTVPPPLPL). A propeptide spans 476 to 492 (GHSEAPATWTVPPPLPL) (may be removed but is not necessary for activation). Thr-485 carries an O-linked (GalNAc...) threonine glycan.

The protein belongs to the peptidase S1 family. In terms of assembly, the two chains are formed from a single-chain precursor by the excision of two Arg residues and are held together by 1 or more disulfide bonds. Forms a heterodimer with SERPINA5. Interacts (activated) with guianensin, an anticoagulant protein from Simulium guianense saliva. Interacts (activated) with simukunin, an anticoagulant protein from Simulium vittatum saliva. In terms of processing, the vitamin K-dependent, enzymatic carboxylation of some glutamate residues allows the modified protein to bind calcium. N- and O-glycosylated. Post-translationally, proteolytically cleaved and activated by cathepsin CTSG. The activation peptide is cleaved by factor IXa (in the intrinsic pathway), or by factor VIIa (in the extrinsic pathway). In terms of processing, the iron and 2-oxoglutarate dependent 3-hydroxylation of aspartate and asparagine is (R) stereospecific within EGF domains.

The protein resides in the secreted. The enzyme catalyses Selective cleavage of Arg-|-Thr and then Arg-|-Ile bonds in prothrombin to form thrombin.. Its activity is regulated as follows. Inhibited by SERPINA5. Factor Xa is a vitamin K-dependent glycoprotein that converts prothrombin to thrombin in the presence of factor Va, calcium and phospholipid during blood clotting. Factor Xa activates pro-inflammatory and pro-fibrotic signaling pathways in a protease-activated receptor (PAR)-dependent manner. The protein is Coagulation factor X (F10) of Bos taurus (Bovine).